The sequence spans 199 residues: Recombination protein RecR (199 aa).

The C4-type zinc finger occupies C58–C73. The Toprim domain maps to A81 to P176.

Belongs to the RecR family.

Functionally, may play a role in DNA repair. It seems to be involved in an RecBC-independent recombinational process of DNA repair. It may act with RecF and RecO. The protein is Recombination protein RecR of Heliobacterium modesticaldum (strain ATCC 51547 / Ice1).